A 393-amino-acid polypeptide reads, in one-letter code: NAD(P)H-quinone oxidoreductase subunit H, chloroplastic (393 aa).

Belongs to the complex I 49 kDa subunit family. NDH is composed of at least 16 different subunits, 5 of which are encoded in the nucleus.

It is found in the plastid. Its subcellular location is the chloroplast thylakoid membrane. The enzyme catalyses a plastoquinone + NADH + (n+1) H(+)(in) = a plastoquinol + NAD(+) + n H(+)(out). The catalysed reaction is a plastoquinone + NADPH + (n+1) H(+)(in) = a plastoquinol + NADP(+) + n H(+)(out). In terms of biological role, NDH shuttles electrons from NAD(P)H:plastoquinone, via FMN and iron-sulfur (Fe-S) centers, to quinones in the photosynthetic chain and possibly in a chloroplast respiratory chain. The immediate electron acceptor for the enzyme in this species is believed to be plastoquinone. Couples the redox reaction to proton translocation, and thus conserves the redox energy in a proton gradient. The sequence is that of NAD(P)H-quinone oxidoreductase subunit H, chloroplastic from Angiopteris evecta (Mule's foot fern).